We begin with the raw amino-acid sequence, 224 residues long: C-&gt;U-editing enzyme APOBEC-2 (224 aa).

The tract at residues 1–23 is disordered; the sequence is MAQKEEAAEAAAPASQNGDDLEN. 2 residues coordinate Zn(2+): Glu60 and His98. A CMP/dCMP-type deaminase domain is found at 64 to 169; sequence GRNKTFLCYV…PEVQAALKKL (106 aa). Glu100 functions as the Proton donor in the catalytic mechanism. 2 residues coordinate Zn(2+): Cys128 and Cys131.

Belongs to the cytidine and deoxycytidylate deaminase family. In terms of assembly, homotetramer. Zn(2+) serves as cofactor. As to expression, expressed exclusively in heart and skeletal muscle.

The enzyme catalyses cytidine(6666) in apoB mRNA + H2O + H(+) = uridine(6666) in apoB mRNA + NH4(+). Its function is as follows. Probable C to U editing enzyme whose physiological substrate is not yet known. Does not display detectable apoB mRNA editing. Has a low intrinsic cytidine deaminase activity. May play a role in the epigenetic regulation of gene expression through the process of active DNA demethylation. The chain is C-&gt;U-editing enzyme APOBEC-2 (Apobec2) from Mus musculus (Mouse).